Here is an 84-residue protein sequence, read N- to C-terminus: Toxin To10 (84 aa).

A signal peptide spans 1-19; sequence MNYSTLIAVASLLTAGTES. The region spanning 21 to 80 is the LCN-type CS-alpha/beta domain; the sequence is KDGYPVEGSCAFPCGYDNAYCDKLCKERKADSGYCYWVNILCYCYGLPDNAAIKGYGRCK. Disulfide bonds link C30-C79, C34-C55, C41-C62, and C45-C64. Position 81 is a proline amide (P81).

The protein belongs to the long (4 C-C) scorpion toxin superfamily. Sodium channel inhibitor family. Alpha subfamily. Expressed by the venom gland.

It localises to the secreted. In terms of biological role, alpha toxins bind voltage-independently at site-3 of sodium channels (Nav) and inhibit the inactivation of the activated channels, thereby blocking neuronal transmission. The polypeptide is Toxin To10 (Tityus obscurus (Amazonian scorpion)).